Here is a 296-residue protein sequence, read N- to C-terminus: 4-hydroxy-tetrahydrodipicolinate synthase (296 aa).

A pyruvate-binding site is contributed by T49. Y137 acts as the Proton donor/acceptor in catalysis. The active-site Schiff-base intermediate with substrate is K166. I208 provides a ligand contact to pyruvate.

This sequence belongs to the DapA family. In terms of assembly, homotetramer; dimer of dimers.

It localises to the cytoplasm. It carries out the reaction L-aspartate 4-semialdehyde + pyruvate = (2S,4S)-4-hydroxy-2,3,4,5-tetrahydrodipicolinate + H2O + H(+). Its pathway is amino-acid biosynthesis; L-lysine biosynthesis via DAP pathway; (S)-tetrahydrodipicolinate from L-aspartate: step 3/4. Its function is as follows. Catalyzes the condensation of (S)-aspartate-beta-semialdehyde [(S)-ASA] and pyruvate to 4-hydroxy-tetrahydrodipicolinate (HTPA). In Chlorobium chlorochromatii (strain CaD3), this protein is 4-hydroxy-tetrahydrodipicolinate synthase.